Reading from the N-terminus, the 246-residue chain is 1-(5-phosphoribosyl)-5-[(5-phosphoribosylamino)methylideneamino] imidazole-4-carboxamide isomerase (246 aa).

The active-site Proton acceptor is the aspartate 8. Aspartate 130 acts as the Proton donor in catalysis.

The protein belongs to the HisA/HisF family.

The protein resides in the cytoplasm. It carries out the reaction 1-(5-phospho-beta-D-ribosyl)-5-[(5-phospho-beta-D-ribosylamino)methylideneamino]imidazole-4-carboxamide = 5-[(5-phospho-1-deoxy-D-ribulos-1-ylimino)methylamino]-1-(5-phospho-beta-D-ribosyl)imidazole-4-carboxamide. Its pathway is amino-acid biosynthesis; L-histidine biosynthesis; L-histidine from 5-phospho-alpha-D-ribose 1-diphosphate: step 4/9. The protein is 1-(5-phosphoribosyl)-5-[(5-phosphoribosylamino)methylideneamino] imidazole-4-carboxamide isomerase of Halorhodospira halophila (strain DSM 244 / SL1) (Ectothiorhodospira halophila (strain DSM 244 / SL1)).